A 227-amino-acid chain; its full sequence is Ribosomal RNA small subunit methyltransferase G (227 aa).

S-adenosyl-L-methionine contacts are provided by residues G74, L79, 124 to 125 (AE), and R142.

Belongs to the methyltransferase superfamily. RNA methyltransferase RsmG family.

Its subcellular location is the cytoplasm. Specifically methylates the N7 position of guanine in position 518 of 16S rRNA. This Mycolicibacterium vanbaalenii (strain DSM 7251 / JCM 13017 / BCRC 16820 / KCTC 9966 / NRRL B-24157 / PYR-1) (Mycobacterium vanbaalenii) protein is Ribosomal RNA small subunit methyltransferase G.